The primary structure comprises 254 residues: MLQTEMKVIQQTEIADKVYELILSGECVMDMSPGQFLMLKPSRSDLLMRRPISICSYDKSAQTCILLYRVEGDGTEDFSKLSSDDTIDVLGPLGKGFDIDRTPEPKTALLIGGGIGVPPMYQLGKELAGKGVQVTFVNGFQSAKDSFYEKEMTKYGTVHIATVDGTLGTQGFVTDITKNFLEEPDVIYSCGPKAMLEAVKASFPETKTYLSLEERMACGIGACYACVCPKADDRNKQFKVCEDGPVFRADEVSL.

An FAD-binding FR-type domain is found at 1 to 99; sequence MLQTEMKVIQ…LGPLGKGFDI (99 aa). Residues 50-53, 67-69, and 74-75 contribute to the FAD site; these read RPIS, LYR, and GT. Cysteine 218, cysteine 223, cysteine 226, and cysteine 241 together coordinate [2Fe-2S] cluster.

Belongs to the PyrK family. As to quaternary structure, heterotetramer of 2 PyrK and 2 PyrD type B subunits. It depends on [2Fe-2S] cluster as a cofactor. FAD serves as cofactor.

It functions in the pathway pyrimidine metabolism; UMP biosynthesis via de novo pathway; orotate from (S)-dihydroorotate (NAD(+) route): step 1/1. Functionally, responsible for channeling the electrons from the oxidation of dihydroorotate from the FMN redox center in the PyrD type B subunit to the ultimate electron acceptor NAD(+). The polypeptide is Dihydroorotate dehydrogenase B (NAD(+)), electron transfer subunit (Listeria welshimeri serovar 6b (strain ATCC 35897 / DSM 20650 / CCUG 15529 / CIP 8149 / NCTC 11857 / SLCC 5334 / V8)).